We begin with the raw amino-acid sequence, 40 residues long: U4-ctenitoxin-Co1c (40 aa).

Disulfide bonds link Cys3–Cys20, Cys10–Cys26, Cys19–Cys40, and Cys28–Cys38.

In terms of tissue distribution, expressed by the venom gland.

The protein localises to the secreted. Functionally, not toxic to mice by intracerebroventricular injection. This Ctenus ornatus (Brazilian spider) protein is U4-ctenitoxin-Co1c.